A 192-amino-acid chain; its full sequence is UPF0149 protein YE3397 (192 aa).

This sequence belongs to the UPF0149 family.

This is UPF0149 protein YE3397 from Yersinia enterocolitica serotype O:8 / biotype 1B (strain NCTC 13174 / 8081).